The primary structure comprises 91 residues: Small ribosomal subunit protein bS20 (91 aa).

This sequence belongs to the bacterial ribosomal protein bS20 family.

Functionally, binds directly to 16S ribosomal RNA. This chain is Small ribosomal subunit protein bS20, found in Mycoplasma mobile (strain ATCC 43663 / 163K / NCTC 11711) (Mesomycoplasma mobile).